The primary structure comprises 151 residues: Coiled-coil-helix-coiled-coil-helix domain-containing protein 2 (151 aa).

Disordered stretches follow at residues 1-50 and 77-111; these read MPRG…AAAP and GHAI…AQQQ. The segment covering 10–26 has biased composition (low complexity); sequence SRMAPPASRAPQMRAAP. Positions 27–38 are enriched in pro residues; that stretch reads RPAPVAQPPAAA. Low complexity-rich tracts occupy residues 39–50 and 100–111; these read PPSAVGSSAAAP and QEPQGTQPAQQQ. The 41-residue stretch at 111–151 folds into the CHCH domain; that stretch reads QQPCLYEIKQFLECAQNQGDIKLCEGFNEVLKQCRLANGLA. Short sequence motifs (cx9C motif) lie at residues 114–124 and 134–144; these read CLYEIKQFLEC and CEGFNEVLKQC. Cystine bridges form between C114–C144 and C124–C134.

Interacts with RBPJ.

It localises to the nucleus. Its subcellular location is the mitochondrion. The protein resides in the mitochondrion intermembrane space. Its function is as follows. Transcription factor. Binds to the oxygen responsive element of COX4I2 and activates its transcription under hypoxia conditions (4% oxygen), as well as normoxia conditions (20% oxygen). This Homo sapiens (Human) protein is Coiled-coil-helix-coiled-coil-helix domain-containing protein 2 (CHCHD2).